The chain runs to 340 residues: Probable peroxidase 61 (340 aa).

A signal peptide spans methionine 1 to alanine 25. Disulfide bonds link cysteine 46-cysteine 122, cysteine 79-cysteine 84, cysteine 128-cysteine 331, and cysteine 205-cysteine 237. A glycan (N-linked (GlcNAc...) asparagine) is linked at asparagine 63. Residue arginine 73 is part of the active site. 5 residues coordinate Ca(2+): aspartate 78, valine 81, glycine 83, aspartate 85, and serine 87. Proline 168 contributes to the substrate binding site. Histidine 198 contributes to the heme b binding site. Serine 199 contacts Ca(2+). A glycan (N-linked (GlcNAc...) asparagine) is linked at asparagine 226. Ca(2+)-binding residues include aspartate 255 and serine 258.

This sequence belongs to the peroxidase family. Classical plant (class III) peroxidase subfamily. Heme b is required as a cofactor. Requires Ca(2+) as cofactor.

The protein resides in the secreted. The catalysed reaction is 2 a phenolic donor + H2O2 = 2 a phenolic radical donor + 2 H2O. Its function is as follows. Removal of H(2)O(2), oxidation of toxic reductants, biosynthesis and degradation of lignin, suberization, auxin catabolism, response to environmental stresses such as wounding, pathogen attack and oxidative stress. The enzyme activity has to be proved. The sequence is that of Probable peroxidase 61 (PER61) from Arabidopsis thaliana (Mouse-ear cress).